We begin with the raw amino-acid sequence, 163 residues long: Small ribosomal subunit protein uS5 (163 aa).

The S5 DRBM domain maps to 8–71 (FIEKVVSLNR…EQARKAMMKI (64 aa)).

It belongs to the universal ribosomal protein uS5 family. Part of the 30S ribosomal subunit. Contacts proteins S4 and S8.

Functionally, with S4 and S12 plays an important role in translational accuracy. Located at the back of the 30S subunit body where it stabilizes the conformation of the head with respect to the body. The protein is Small ribosomal subunit protein uS5 of Lawsonia intracellularis (strain PHE/MN1-00).